The chain runs to 424 residues: UDP-N-acetylglucosamine 1-carboxyvinyltransferase (424 aa).

Residue 22–23 participates in phosphoenolpyruvate binding; the sequence is KN. R93 provides a ligand contact to UDP-N-acetyl-alpha-D-glucosamine. The Proton donor role is filled by C117. 2-(S-cysteinyl)pyruvic acid O-phosphothioketal is present on C117. Residues 122 to 126, D307, and I329 each bind UDP-N-acetyl-alpha-D-glucosamine; that span reads RPIDL.

Belongs to the EPSP synthase family. MurA subfamily.

The protein localises to the cytoplasm. The catalysed reaction is phosphoenolpyruvate + UDP-N-acetyl-alpha-D-glucosamine = UDP-N-acetyl-3-O-(1-carboxyvinyl)-alpha-D-glucosamine + phosphate. Its pathway is cell wall biogenesis; peptidoglycan biosynthesis. Cell wall formation. Adds enolpyruvyl to UDP-N-acetylglucosamine. The protein is UDP-N-acetylglucosamine 1-carboxyvinyltransferase of Chlorobium phaeovibrioides (strain DSM 265 / 1930) (Prosthecochloris vibrioformis (strain DSM 265)).